A 488-amino-acid chain; its full sequence is Glutamate--tRNA ligase (488 aa).

The short motif at 16–26 (PSPTGEPHVGT) is the 'HIGH' region element. The 'KMSKS' region signature appears at 257–261 (KLSKR). Lysine 260 lines the ATP pocket.

The protein belongs to the class-I aminoacyl-tRNA synthetase family. Glutamate--tRNA ligase type 1 subfamily. In terms of assembly, monomer.

Its subcellular location is the cytoplasm. It carries out the reaction tRNA(Glu) + L-glutamate + ATP = L-glutamyl-tRNA(Glu) + AMP + diphosphate. Catalyzes the attachment of glutamate to tRNA(Glu) in a two-step reaction: glutamate is first activated by ATP to form Glu-AMP and then transferred to the acceptor end of tRNA(Glu). This chain is Glutamate--tRNA ligase, found in Rhizobium johnstonii (strain DSM 114642 / LMG 32736 / 3841) (Rhizobium leguminosarum bv. viciae).